Here is a 282-residue protein sequence, read N- to C-terminus: Probable endonuclease 4 (282 aa).

His70, His110, Glu146, Asp180, His183, His217, Asp230, His232, and Glu262 together coordinate Zn(2+).

It belongs to the AP endonuclease 2 family. It depends on Zn(2+) as a cofactor.

The enzyme catalyses Endonucleolytic cleavage to 5'-phosphooligonucleotide end-products.. Its function is as follows. Endonuclease IV plays a role in DNA repair. It cleaves phosphodiester bonds at apurinic or apyrimidinic (AP) sites, generating a 3'-hydroxyl group and a 5'-terminal sugar phosphate. This is Probable endonuclease 4 from Wolinella succinogenes (strain ATCC 29543 / DSM 1740 / CCUG 13145 / JCM 31913 / LMG 7466 / NCTC 11488 / FDC 602W) (Vibrio succinogenes).